A 489-amino-acid polypeptide reads, in one-letter code: Betaine aldehyde dehydrogenase (489 aa).

Residues Thr26 and Asp93 each contribute to the K(+) site. 150–152 provides a ligand contact to NAD(+); that stretch reads GAW. Residue Lys162 is the Charge relay system of the active site. Residue 176 to 179 coordinates NAD(+); it reads KPSE. Val180 is a binding site for K(+). An NAD(+)-binding site is contributed by 229-232; that stretch reads GVET. K(+) is bound at residue Leu245. Glu251 (proton acceptor) is an active-site residue. NAD(+)-binding residues include Gly253, Cys285, and Glu386. Catalysis depends on Cys285, which acts as the Nucleophile. Cys285 carries the cysteine sulfenic acid (-SOH) modification. 2 residues coordinate K(+): Lys456 and Gly459. Glu463 (charge relay system) is an active-site residue.

The protein belongs to the aldehyde dehydrogenase family. Dimer of dimers. K(+) is required as a cofactor.

The catalysed reaction is betaine aldehyde + NAD(+) + H2O = glycine betaine + NADH + 2 H(+). The protein operates within amine and polyamine biosynthesis; betaine biosynthesis via choline pathway; betaine from betaine aldehyde: step 1/1. Involved in the biosynthesis of the osmoprotectant glycine betaine. Catalyzes the irreversible oxidation of betaine aldehyde to the corresponding acid. This is Betaine aldehyde dehydrogenase from Burkholderia pseudomallei (strain K96243).